The sequence spans 516 residues: 7-chloro-L-tryptophan 6-halogenase KtzR (516 aa).

Residues G6, T8, A9, E42, and A43 each contribute to the FAD site. Residue K71 is part of the active site. FAD is bound at residue V195. Chloride-binding residues include T357 and G358. Position 359 (I359) interacts with FAD.

Belongs to the flavin-dependent halogenase family. Bacterial tryptophan halogenase subfamily.

The enzyme catalyses 7-chloro-L-tryptophan + FADH2 + chloride + O2 = 6,7-dichloro-L-tryptophan + FAD + 2 H2O. Functionally, involved in the biosynthesis of kutznerides, actinomycete-derived antifungal and antimicrobial cyclic hexadepsipeptides. Together with KtzQ, catalyzes the regiospecific dichlorination of L-tryptophan (L-Trp) to produce 6,7-dichloro-L-tryptophan. KtzR catalyzes the chlorination of 7-chloro-L-tryptophan at C6 position to yield 6,7-dichloro-L-tryptophan. Can also use L-Trp as substrate and form 6-chloro-L-tryptophan, but has a 120-fold preference for 7-chloro-L-tryptophan over L-Trp. Cannot use piperazic acid or gamma,delta-dehydropiperazic acid. This is 7-chloro-L-tryptophan 6-halogenase KtzR from Kutzneria sp. (strain 744).